The sequence spans 191 residues: uncharacterized protein (191 aa).

An HTH tetR-type domain is found at 5 to 65; the sequence is GDSREKILHT…IEAVTYTGKI (61 aa). Positions 28–47 form a DNA-binding region, H-T-H motif; that stretch reads GLNQIVKESGAPKGSLYHFF.

This is an uncharacterized protein from Bacillus subtilis (strain 168).